A 589-amino-acid polypeptide reads, in one-letter code: ATP-dependent lipid A-core flippase (589 aa).

5 consecutive transmembrane segments (helical) span residues 29-49 (LLLV…TGFL), 70-90 (WLPV…YITD), 157-177 (VIGA…TILV), 261-281 (MIGA…ALAG), and 283-303 (LTAG…PGLK). Positions 32-314 (VAALIAALIE…LTNVQNMVQR (283 aa)) constitute an ABC transmembrane type-1 domain. An ABC transporter domain is found at 346–582 (IEFRDVTARY…GGLYSHLHGM (237 aa)). Residue 380–387 (GRSGSGKS) coordinates ATP.

The protein belongs to the ABC transporter superfamily. Lipid exporter (TC 3.A.1.106) family. Homodimer.

It localises to the cell inner membrane. It catalyses the reaction ATP + H2O + lipid A-core oligosaccharideSide 1 = ADP + phosphate + lipid A-core oligosaccharideSide 2.. Its function is as follows. Involved in lipopolysaccharide (LPS) biosynthesis. Translocates lipid A-core from the inner to the outer leaflet of the inner membrane. Transmembrane domains (TMD) form a pore in the inner membrane and the ATP-binding domain (NBD) is responsible for energy generation. This Xanthomonas campestris pv. campestris (strain 8004) protein is ATP-dependent lipid A-core flippase.